Reading from the N-terminus, the 446-residue chain is Signal recognition particle 54 kDa protein (446 aa).

Residues Gly103–Thr110, Asp185–Arg189, and Thr245–Asp248 contribute to the GTP site.

This sequence belongs to the GTP-binding SRP family. SRP54 subfamily. Part of the signal recognition particle protein translocation system, which is composed of SRP and FtsY. Archaeal SRP consists of a 7S RNA molecule of 300 nucleotides and two protein subunits: SRP54 and SRP19.

Its subcellular location is the cytoplasm. It catalyses the reaction GTP + H2O = GDP + phosphate + H(+). Functionally, involved in targeting and insertion of nascent membrane proteins into the cytoplasmic membrane. Binds to the hydrophobic signal sequence of the ribosome-nascent chain (RNC) as it emerges from the ribosomes. The SRP-RNC complex is then targeted to the cytoplasmic membrane where it interacts with the SRP receptor FtsY. The protein is Signal recognition particle 54 kDa protein of Metallosphaera sedula (strain ATCC 51363 / DSM 5348 / JCM 9185 / NBRC 15509 / TH2).